Here is a 735-residue protein sequence, read N- to C-terminus: Protostadienol synthase A (735 aa).

One copy of the PFTB 1 repeat lies at 129-170 (KNEMIRYLLNFVNEDGGWGLWINSPSTVFGTTMNYTMLRILG). The active-site Proton donor is aspartate 460. 3 PFTB repeats span residues 487-528 (LAEA…YDNV), 564-604 (MARC…ETVG), and 613-660 (CRNA…ALMG).

It belongs to the terpene cyclase/mutase family.

It catalyses the reaction (S)-2,3-epoxysqualene = (17Z)-protosta-17(20),24-dien-3beta-ol. In terms of biological role, protostadienol synthase which cyclizes (3S)-oxidosqualene to (17Z)-protosta-17(20),24-dien-3-beta-ol (protostadienol), the biosynthetic precursor of helvolic acid, a secondary metabolite which promotes virulence. In Arthroderma gypseum (strain ATCC MYA-4604 / CBS 118893) (Microsporum gypseum), this protein is Protostadienol synthase A (PDSA).